Reading from the N-terminus, the 272-residue chain is Shikimate dehydrogenase (NADP(+)) (272 aa).

Shikimate-binding positions include 14–16 and threonine 61; that span reads SLS. Residue lysine 65 is the Proton acceptor of the active site. Shikimate is bound at residue aspartate 102. Residues 127–131, 151–156, and leucine 215 contribute to the NADP(+) site; these read GAGGA and NRTPSK. Position 217 (tyrosine 217) interacts with shikimate. Glycine 239 contacts NADP(+).

The protein belongs to the shikimate dehydrogenase family. In terms of assembly, homodimer.

It catalyses the reaction shikimate + NADP(+) = 3-dehydroshikimate + NADPH + H(+). The protein operates within metabolic intermediate biosynthesis; chorismate biosynthesis; chorismate from D-erythrose 4-phosphate and phosphoenolpyruvate: step 4/7. Functionally, involved in the biosynthesis of the chorismate, which leads to the biosynthesis of aromatic amino acids. Catalyzes the reversible NADPH linked reduction of 3-dehydroshikimate (DHSA) to yield shikimate (SA). The protein is Shikimate dehydrogenase (NADP(+)) of Coxiella burnetii (strain CbuG_Q212) (Coxiella burnetii (strain Q212)).